A 152-amino-acid polypeptide reads, in one-letter code: Large ribosomal subunit protein uL15 (152 aa).

The segment at 1 to 57 is disordered; sequence MTSTLNTLKSNSGSRKKKLRKGRGIAAGQGASCGFGMRGQKSRSGRPTRPGFEGGQM. A compositionally biased stretch (basic residues) spans 14–23; that stretch reads SRKKKLRKGR. Over residues 25–37 the composition is skewed to gly residues; sequence IAAGQGASCGFGM.

This sequence belongs to the universal ribosomal protein uL15 family. Part of the 50S ribosomal subunit.

Binds to the 23S rRNA. The protein is Large ribosomal subunit protein uL15 of Prochlorococcus marinus (strain MIT 9312).